The primary structure comprises 345 residues: N-acetyl-gamma-glutamyl-phosphate reductase (345 aa).

Cys-149 is an active-site residue.

This sequence belongs to the NAGSA dehydrogenase family. Type 1 subfamily.

The protein resides in the cytoplasm. The enzyme catalyses N-acetyl-L-glutamate 5-semialdehyde + phosphate + NADP(+) = N-acetyl-L-glutamyl 5-phosphate + NADPH + H(+). Its pathway is amino-acid biosynthesis; L-arginine biosynthesis; N(2)-acetyl-L-ornithine from L-glutamate: step 3/4. Its function is as follows. Catalyzes the NADPH-dependent reduction of N-acetyl-5-glutamyl phosphate to yield N-acetyl-L-glutamate 5-semialdehyde. This chain is N-acetyl-gamma-glutamyl-phosphate reductase, found in Marinobacter nauticus (strain ATCC 700491 / DSM 11845 / VT8) (Marinobacter aquaeolei).